We begin with the raw amino-acid sequence, 371 residues long: tRNA-specific 2-thiouridylase MnmA (371 aa).

Residues 13-20 (GMSGGVDS) and M39 contribute to the ATP site. Residues 99 to 101 (NPD) are interaction with target base in tRNA. C104 functions as the Nucleophile in the catalytic mechanism. Cysteines 104 and 200 form a disulfide. ATP is bound at residue G128. The segment at 150 to 152 (KDQ) is interaction with tRNA. Residue C200 is the Cysteine persulfide intermediate of the active site. The tract at residues 308 to 309 (RY) is interaction with tRNA.

It belongs to the MnmA/TRMU family.

The protein localises to the cytoplasm. The catalysed reaction is S-sulfanyl-L-cysteinyl-[protein] + uridine(34) in tRNA + AH2 + ATP = 2-thiouridine(34) in tRNA + L-cysteinyl-[protein] + A + AMP + diphosphate + H(+). Catalyzes the 2-thiolation of uridine at the wobble position (U34) of tRNA, leading to the formation of s(2)U34. This Listeria monocytogenes serotype 4a (strain HCC23) protein is tRNA-specific 2-thiouridylase MnmA.